The following is a 571-amino-acid chain: 2-succinyl-5-enolpyruvyl-6-hydroxy-3-cyclohexene-1-carboxylate synthase (571 aa).

This sequence belongs to the TPP enzyme family. MenD subfamily. In terms of assembly, homodimer. Mg(2+) is required as a cofactor. Mn(2+) serves as cofactor. It depends on thiamine diphosphate as a cofactor.

It carries out the reaction isochorismate + 2-oxoglutarate + H(+) = 5-enolpyruvoyl-6-hydroxy-2-succinyl-cyclohex-3-ene-1-carboxylate + CO2. The protein operates within quinol/quinone metabolism; 1,4-dihydroxy-2-naphthoate biosynthesis; 1,4-dihydroxy-2-naphthoate from chorismate: step 2/7. It functions in the pathway quinol/quinone metabolism; menaquinone biosynthesis. Its function is as follows. Catalyzes the thiamine diphosphate-dependent decarboxylation of 2-oxoglutarate and the subsequent addition of the resulting succinic semialdehyde-thiamine pyrophosphate anion to isochorismate to yield 2-succinyl-5-enolpyruvyl-6-hydroxy-3-cyclohexene-1-carboxylate (SEPHCHC). This Lysinibacillus sphaericus (strain C3-41) protein is 2-succinyl-5-enolpyruvyl-6-hydroxy-3-cyclohexene-1-carboxylate synthase.